We begin with the raw amino-acid sequence, 844 residues long: MRIMIKGGVWKNTEDEILKAAVMKYGKNQWARISSLLVRKSAKQCKARWYEWLDPSIKKTEWTREEDEKLLHLAKLLPTQWRTIAPIVGRTPSQCLERYEKLLDAACTKDENYDAADDPRKLRPGEIDPNPEAKPARPDPVDMDEDEKEMLSEARARLANTRGKKAKRKAREKQLEEARRLASLQKRRELKAAGIDGRHRKRKRKGIDYNAEIPFEKRAPAGFYDTADEDRPADQVKFPTTIEELEGKRRADVEAHLRKQDVARNKIAQRQDAPAAILQANKLNDPEVVRKRSKLMLPPPQISDHELEEIAKMGYASDLLAENEELTEGSAATRALLANYSQTPRQGMTPMRTPQRTPAGKGDAIMMEAENLARLRDSQTPLLGGENPELHPSDFTGVTPRKKEIQTPNPMLTPSMTPGGAGLTPRIGLTPSRDGSSFSMTPKGTPFRDELHINEDMDMHESAKLERQRREEARRSLRSGLTGLPQPKNEYQIVAQPPPEESEEPEEKIEEDMSDRIAREKAEEEARQQALLKKRSKVLQRDLPRPPAASLAVIRNSLLSADGDKSSVVPPTPIEVADKMVREELLQLLEHDNAKYPLDDKAEKKKGAKNRTNRSASQVLAIDDFDENELQEADKMIKEEGKFLCVSMGHENKTLDDFVEAHNTCVNDLMYFPTRSAYELSSVAGNADKVAAFQEEMENVRKKMEEDEKKAEHMKAKYKTYTKGHERRAETVWTQIEATLKQAEIGGTEVECFKALKRQEEMAASFRKKNLQEEVIKQKETESKLQTRYGNMLAMVEKAEEIMVGFRAQALKKQEDVEDSHKLKEAKLATGEEEDIAIAMEASA.

HTH myb-type domains lie at 2-57 (RIMI…DPSI) and 58-107 (KKTE…DAAC). 2 consecutive DNA-binding regions (H-T-H motif) follow at residues 30–53 (WARISSLLVRKSAKQCKARWYEWL) and 81–103 (WRTIAPIVGRTPSQCLERYEKLL). Residues 113–126 (YDAADDPRKLRPGE) are compositionally biased toward basic and acidic residues. The interval 113 to 147 (YDAADDPRKLRPGEIDPNPEAKPARPDPVDMDEDE) is disordered. Residues 145–189 (EDEKEMLSEARARLANTRGKKAKRKAREKQLEEARRLASLQKRRE) are a coiled coil. Thr343 carries the post-translational modification Phosphothreonine. Positions 379 to 514 (QTPLLGGENP…PEEKIEEDMS (136 aa)) are disordered. Composition is skewed to polar residues over residues 406-416 (QTPNPMLTPSM) and 433-442 (RDGSSFSMTP). The span at 446 to 475 (PFRDELHINEDMDMHESAKLERQRREEARR) shows a compositional bias: basic and acidic residues. The segment covering 500–513 (EESEEPEEKIEEDM) has biased composition (acidic residues). Residues 685-723 (GNADKVAAFQEEMENVRKKMEEDEKKAEHMKAKYKTYTK) adopt a coiled-coil conformation.

It belongs to the CEF1 family. As to quaternary structure, component of the multiprotein assembly MOS4-associated complex (MAC) at least composed of MOS4, CDC5, PRL1 and PRP19. Interacts with PRL1, MOS4 and PRP19A. Associated with the spliceosome. As to expression, expressed extensively in shoot and root meristems.

The protein resides in the nucleus. In terms of biological role, component of the MAC complex that probably regulates defense responses through transcriptional control and thereby is essential for plant innate immunity. Possesses a sequence specific DNA sequence 'CTCAGCG' binding activity. Involved in mRNA splicing and cell cycle control. May also play a role in the response to DNA damage. The polypeptide is Cell division cycle 5-like protein (CDC5) (Arabidopsis thaliana (Mouse-ear cress)).